Here is a 288-residue protein sequence, read N- to C-terminus: uncharacterized protein (288 aa).

Positions 5-81 constitute an HTH rpiR-type domain; it reads GNVLNKIGSL…LELSIELATK (77 aa). The segment at residues 41–60 is a DNA-binding region (H-T-H motif); the sequence is LSEIAKHLQVGEATLVRFCR. One can recognise an SIS domain in the interval 129-269; that stretch reads VVKVLKKARR…YALLVQGEED (141 aa).

This is an uncharacterized protein from Haemophilus influenzae (strain ATCC 51907 / DSM 11121 / KW20 / Rd).